The following is a 232-amino-acid chain: 2-C-methyl-D-erythritol 4-phosphate cytidylyltransferase (232 aa).

It belongs to the IspD/TarI cytidylyltransferase family. IspD subfamily.

It carries out the reaction 2-C-methyl-D-erythritol 4-phosphate + CTP + H(+) = 4-CDP-2-C-methyl-D-erythritol + diphosphate. The protein operates within isoprenoid biosynthesis; isopentenyl diphosphate biosynthesis via DXP pathway; isopentenyl diphosphate from 1-deoxy-D-xylulose 5-phosphate: step 2/6. Catalyzes the formation of 4-diphosphocytidyl-2-C-methyl-D-erythritol from CTP and 2-C-methyl-D-erythritol 4-phosphate (MEP). This is 2-C-methyl-D-erythritol 4-phosphate cytidylyltransferase from Stenotrophomonas maltophilia (strain R551-3).